A 601-amino-acid chain; its full sequence is DNA topoisomerase I, mitochondrial (601 aa).

The N-terminal 50 residues, 1-50, are a transit peptide targeting the mitochondrion; it reads MRVVRLLRLRAALTLLGEVPRRPASRGVPGSRRTQKGSGARWEKEKHEDG. The disordered stretch occupies residues 22-48; sequence RPASRGVPGSRRTQKGSGARWEKEKHE. 3 interaction with DNA regions span residues 261-262, 324-329, and 421-423; these read KY, RAGNEK, and TAK. In terms of domain architecture, Topo IB-type catalytic spans 268-601; that stretch reads CSKLKGETAW…LAMAGEDFEF (334 aa). The active-site O-(3'-phospho-DNA)-tyrosine intermediate is the Tyr-559.

It belongs to the type IB topoisomerase family. The cofactor is Ca(2+). Requires Mg(2+) as cofactor. In terms of tissue distribution, ubiquitous; highest in skeletal muscle, heart, brain and fetal liver.

It is found in the mitochondrion. The enzyme catalyses ATP-independent breakage of single-stranded DNA, followed by passage and rejoining.. Its function is as follows. Releases the supercoiling and torsional tension of DNA introduced during duplication of mitochondrial DNA by transiently cleaving and rejoining one strand of the DNA duplex. Introduces a single-strand break via transesterification at a target site in duplex DNA. The scissile phosphodiester is attacked by the catalytic tyrosine of the enzyme, resulting in the formation of a DNA-(3'-phosphotyrosyl)-enzyme intermediate and the expulsion of a 5'-OH DNA strand. The free DNA strand then rotates around the intact phosphodiester bond on the opposing strand, thus removing DNA supercoils. Finally, in the religation step, the DNA 5'-OH attacks the covalent intermediate to expel the active-site tyrosine and restore the DNA phosphodiester backbone. The polypeptide is DNA topoisomerase I, mitochondrial (TOP1MT) (Homo sapiens (Human)).